A 184-amino-acid chain; its full sequence is Probable type 3 secretion system regulator AscH (184 aa).

The tract at residues 1–25 is disordered; sequence MKIEGSDQLGGEQPQRQPLPPESMA.

It belongs to the YopR family.

It localises to the secreted. Its function is as follows. May be involved in the regulation of the assembly of the type III secretion system (T3SS), also called injectisome, which is used to inject bacterial effector proteins into eukaryotic host cells. May control the polymerization of the needle. This Aeromonas salmonicida subsp. salmonicida protein is Probable type 3 secretion system regulator AscH.